Consider the following 198-residue polypeptide: Recombination protein RecR (198 aa).

The C4-type zinc finger occupies C57–C72. The Toprim domain maps to G80–P175.

The protein belongs to the RecR family.

May play a role in DNA repair. It seems to be involved in an RecBC-independent recombinational process of DNA repair. It may act with RecF and RecO. This is Recombination protein RecR from Desulforudis audaxviator (strain MP104C).